A 241-amino-acid polypeptide reads, in one-letter code: Carboxy-S-adenosyl-L-methionine synthase (241 aa).

Residues tyrosine 38, 63–65, 88–89, 116–117, asparagine 131, and arginine 198 contribute to the S-adenosyl-L-methionine site; these read GCS, DN, and DI.

It belongs to the class I-like SAM-binding methyltransferase superfamily. Cx-SAM synthase family. In terms of assembly, homodimer.

The catalysed reaction is prephenate + S-adenosyl-L-methionine = carboxy-S-adenosyl-L-methionine + 3-phenylpyruvate + H2O. Functionally, catalyzes the conversion of S-adenosyl-L-methionine (SAM) to carboxy-S-adenosyl-L-methionine (Cx-SAM). This Glaesserella parasuis serovar 5 (strain SH0165) (Haemophilus parasuis) protein is Carboxy-S-adenosyl-L-methionine synthase.